The sequence spans 719 residues: Nucleolar complex protein 2 homolog (719 aa).

Basic residues predominate over residues 1–24; that stretch reads MKLLKKSSSLKKGVTKRAKLQKKP. 3 disordered regions span residues 1–67, 86–136, and 643–719; these read MKLL…GMKK, LQQE…TKIK, and ALEN…SDED. Residues 25–42 are compositionally biased toward basic and acidic residues; sequence PSKDEASSSDEELAKLDG. Over residues 89-130 the composition is skewed to acidic residues; sequence EDADLLNMEEDEDDDEEGEDNEDEEDEEEEEESDEDDDEEDD. A compositionally biased stretch (basic and acidic residues) spans 643–661; that stretch reads ALENSKKDDKKKKKEEEAA.

It belongs to the NOC2 family.

It localises to the nucleus. Its function is as follows. Required for normal somatic gonad development and for regulation of germline development and proliferation. This Caenorhabditis briggsae protein is Nucleolar complex protein 2 homolog (pro-2).